A 179-amino-acid polypeptide reads, in one-letter code: Hypoxanthine phosphoribosyltransferase (179 aa).

Diphosphate contacts are provided by Arg-45 and Gly-46. Residue Glu-101 participates in GMP binding. Glu-101 is an IMP binding site. Mg(2+)-binding residues include Glu-101 and Asp-102. The active-site Proton acceptor is the Asp-105. GMP-binding positions include 105–110, Lys-133, and Asp-161; that span reads DTGYTL. IMP-binding positions include 105 to 110 and Lys-133; that span reads DTGYTL. Diphosphate is bound at residue Arg-167.

The protein belongs to the purine/pyrimidine phosphoribosyltransferase family. As to quaternary structure, homotetramer. Mg(2+) is required as a cofactor.

It localises to the cytoplasm. It carries out the reaction IMP + diphosphate = hypoxanthine + 5-phospho-alpha-D-ribose 1-diphosphate. It catalyses the reaction GMP + diphosphate = guanine + 5-phospho-alpha-D-ribose 1-diphosphate. It participates in purine metabolism; IMP biosynthesis via salvage pathway; IMP from hypoxanthine: step 1/1. Functionally, purine salvage pathway enzyme which catalyzes the transfer of the ribosyl-5-phosphate group from 5-phospho-alpha-D-ribose 1-diphosphate (PRPP) to the N9 position of hypoxanthine to yield IMP (inosine 5'-monophosphate). To a lesser extent, can also act on guanine leading to GMP, but shows a highly less efficient activity with xanthine. This Haemophilus influenzae (strain ATCC 51907 / DSM 11121 / KW20 / Rd) protein is Hypoxanthine phosphoribosyltransferase (hpt).